Consider the following 87-residue polypeptide: Venom serine protease inhibitor (87 aa).

The N-terminal stretch at 1-23 is a signal peptide; sequence MPRLVLVSFLFLAIFSVFIGGFA. Intrachain disulfides connect Cys27-Cys61, Cys36-Cys57, Cys40-Cys53, Cys44-Cys81, and Cys63-Cys75. Positions 27–81 constitute a TIL domain; it reads CPRNEIFTRCHAACQPSCARLARKPFCIKICKPGCICTSGYLRNKNNVCVPRSRC.

The protein belongs to the serine protease inhibitor-like (TIL domain-containing) family. As to expression, specifically expressed by the venom gland.

Its subcellular location is the secreted. Its function is as follows. Antifibrinolytic and antimicrobial serine protease inhibitor. Inhibits trypsin, plasmin and microbial serine proteases but not chymotrypsin, thrombin and elastase. Inhibits the plasmin-mediated degradation of fibrin to fibrin degradation products. Also binds to bacterial and fungal surfaces and exhibits antimicrobial activity against fungi as well as Gram-positive and Gram-negative bacteria. The polypeptide is Venom serine protease inhibitor (Apis cerana (Indian honeybee)).